Reading from the N-terminus, the 492-residue chain is Ribose import ATP-binding protein RbsA (492 aa).

ABC transporter domains lie at 3–239 and 249–492; these read IEMK…VGRS and AEIR…TGGQ. ATP is bound at residue 35-42; the sequence is GENGAGKS.

This sequence belongs to the ABC transporter superfamily. Ribose importer (TC 3.A.1.2.1) family. The complex is composed of an ATP-binding protein (RbsA), two transmembrane proteins (RbsC) and a solute-binding protein (RbsB).

It is found in the cell membrane. It carries out the reaction D-ribose(out) + ATP + H2O = D-ribose(in) + ADP + phosphate + H(+). Its function is as follows. Part of the ABC transporter complex RbsABC involved in ribose import. Responsible for energy coupling to the transport system. In Lactococcus lactis subsp. lactis (strain IL1403) (Streptococcus lactis), this protein is Ribose import ATP-binding protein RbsA.